A 305-amino-acid chain; its full sequence is Methionyl-tRNA formyltransferase (305 aa).

109–112 (SLLP) contributes to the (6S)-5,6,7,8-tetrahydrofolate binding site.

The protein belongs to the Fmt family.

The catalysed reaction is L-methionyl-tRNA(fMet) + (6R)-10-formyltetrahydrofolate = N-formyl-L-methionyl-tRNA(fMet) + (6S)-5,6,7,8-tetrahydrofolate + H(+). In terms of biological role, attaches a formyl group to the free amino group of methionyl-tRNA(fMet). The formyl group appears to play a dual role in the initiator identity of N-formylmethionyl-tRNA by promoting its recognition by IF2 and preventing the misappropriation of this tRNA by the elongation apparatus. The chain is Methionyl-tRNA formyltransferase from Roseobacter denitrificans (strain ATCC 33942 / OCh 114) (Erythrobacter sp. (strain OCh 114)).